Consider the following 951-residue polypeptide: Spliceosome associated factor 3, U4/U6 recycling protein (951 aa).

Residues 1–58 (MAATGNEEQTLLPDIEEEAEGMEREMESEDDEEEGMGVEHSEEEDEEDTSEDERENEA) are disordered. The segment covering 14–56 (DIEEEAEGMEREMESEDDEEEGMGVEHSEEEDEEDTSEDEREN) has biased composition (acidic residues). HAT repeat units follow at residues 88-120 (GKLH…DEIR), 126-157 (SDRE…YSIG), 163-199 (GGIE…FEIV), 222-255 (AQLE…WADD), 304-336 (GDPA…YLDR), 339-371 (KIKD…ALER), 374-410 (ADHQ…YLRR), and 467-500 (KNMQ…LERS). Positions 517–941 (CTSDYPEHVC…LDTQTKSLSN (425 aa)) are necessary and sufficient for U6 snRNA binding. Residues 533–593 (ERVEGSLEDW…VKADKKAQKK (61 aa)) are a coiled coil. A compositionally biased stretch (basic and acidic residues) spans 567-581 (EALHARQEEEKAEQR). The interval 567-686 (EALHARQEEE…HDMPKEQRKD (120 aa)) is disordered. A compositionally biased stretch (basic residues) spans 582-596 (RKVKADKKAQKKGQK). Residues 608–619 (DDDEEEWGEEAE) show a composition bias toward acidic residues. The segment covering 674-686 (RQPHDMPKEQRKD) has biased composition (basic and acidic residues). RRM domains lie at 688–766 (NCVF…PCVD) and 785–862 (HKIF…ISNP). The interval 905-938 (RQSTPDAKAENGTISAPHATVTDGETSLDTQTKS) is disordered. Over residues 927–938 (DGETSLDTQTKS) the composition is skewed to polar residues.

Its subcellular location is the nucleus. The protein localises to the nucleoplasm. It localises to the cajal body. It is found in the nucleus speckle. The protein resides in the cytoplasm. In terms of biological role, U6 snRNP-binding protein that functions as a recycling factor of the splicing machinery. Promotes the initial reassembly of U4 and U6 snRNPs following their ejection from the spliceosome during its maturation. May also function as a substrate targeting factor for deubiquitinases and mediate the deubiquitination of components of the spliceosome and histones. This is Spliceosome associated factor 3, U4/U6 recycling protein from Danio rerio (Zebrafish).